A 298-amino-acid polypeptide reads, in one-letter code: 3-deoxy-manno-octulosonate cytidylyltransferase (298 aa).

The helical transmembrane segment at 22–42 (VWVLHGLALGAAAAAAAVAYL) threads the bilayer.

This sequence belongs to the KdsB family. Mg(2+) is required as a cofactor. As to expression, ubiquitous.

The protein localises to the membrane. It carries out the reaction 3-deoxy-alpha-D-manno-oct-2-ulosonate + CTP = CMP-3-deoxy-beta-D-manno-octulosonate + diphosphate. It functions in the pathway nucleotide-sugar biosynthesis; CMP-3-deoxy-D-manno-octulosonate biosynthesis; CMP-3-deoxy-D-manno-octulosonate from 3-deoxy-D-manno-octulosonate and CTP: step 1/1. Its function is as follows. Catalyzes the production of the sugar nucleotide CMP-3-deoxy-D-manno-octulosonate (CMP-KDO). CTP is the preferred nucleotide donor, and it can partially be replaced with UTP but not with ATP. Activates KDO during the biosynthesis of rhamnogalacturonan II (RG-II), a structurally complex pectic polysaccharide of the primary cell wall. RG-II is essential for the cell wall integrity of rapidly growing tissues and pollen tube growth and elongation. The polypeptide is 3-deoxy-manno-octulosonate cytidylyltransferase (Zea mays (Maize)).